The primary structure comprises 562 residues: Tryptophan 2-monooxygenase (562 aa).

Serine 54, glutamate 74, arginine 76, arginine 82, and arginine 104 together coordinate FMN. Arginine 104 contributes to the substrate binding site.

It belongs to the tryptophan 2-monooxygenase family. FMN is required as a cofactor.

It catalyses the reaction L-tryptophan + O2 = indole-3-acetamide + CO2 + H2O. It functions in the pathway plant hormone metabolism; auxin biosynthesis. This Pantoea agglomerans pv. gypsophilae (Erwinia herbicola) protein is Tryptophan 2-monooxygenase (iaaM).